A 320-amino-acid polypeptide reads, in one-letter code: Nicotianamine synthase 2 (320 aa).

The protein belongs to the nicotianamine synthase (NAS)-like family.

The catalysed reaction is 3 S-adenosyl-L-methionine = nicotianamine + 3 S-methyl-5'-thioadenosine + 3 H(+). In terms of biological role, synthesizes nicotianamine, a polyamine which serves as a sensor for the physiological iron status within the plant, and/or might be involved in the transport of iron. The polypeptide is Nicotianamine synthase 2 (NAS2) (Arabidopsis thaliana (Mouse-ear cress)).